Here is a 73-residue protein sequence, read N- to C-terminus: Large ribosomal subunit protein uL29 (73 aa).

It belongs to the universal ribosomal protein uL29 family.

This Saccharolobus solfataricus (strain ATCC 35092 / DSM 1617 / JCM 11322 / P2) (Sulfolobus solfataricus) protein is Large ribosomal subunit protein uL29 (rpl29).